A 233-amino-acid polypeptide reads, in one-letter code: Orotidine 5'-phosphate decarboxylase (233 aa).

Residues Asp-11, Lys-34, 61–70 (DLKLHDIPNT), Thr-117, Arg-179, Gln-188, Gly-208, and Arg-209 each bind substrate. Lys-63 serves as the catalytic Proton donor.

It belongs to the OMP decarboxylase family. Type 1 subfamily. In terms of assembly, homodimer.

The enzyme catalyses orotidine 5'-phosphate + H(+) = UMP + CO2. It functions in the pathway pyrimidine metabolism; UMP biosynthesis via de novo pathway; UMP from orotate: step 2/2. In terms of biological role, catalyzes the decarboxylation of orotidine 5'-monophosphate (OMP) to uridine 5'-monophosphate (UMP). This Streptococcus pneumoniae serotype 4 (strain ATCC BAA-334 / TIGR4) protein is Orotidine 5'-phosphate decarboxylase.